We begin with the raw amino-acid sequence, 139 residues long: Large ribosomal subunit protein uL16 (139 aa).

Belongs to the universal ribosomal protein uL16 family. In terms of assembly, part of the 50S ribosomal subunit.

Functionally, binds 23S rRNA and is also seen to make contacts with the A and possibly P site tRNAs. In Chlorobium phaeobacteroides (strain DSM 266 / SMG 266 / 2430), this protein is Large ribosomal subunit protein uL16.